The primary structure comprises 360 residues: Peptide chain release factor 1 (360 aa).

An N5-methylglutamine modification is found at Gln-235. Residues 285–304 form a disordered region; sequence KRQQEEASTRRNLLGSGDRS.

Belongs to the prokaryotic/mitochondrial release factor family. In terms of processing, methylated by PrmC. Methylation increases the termination efficiency of RF1.

It is found in the cytoplasm. In terms of biological role, peptide chain release factor 1 directs the termination of translation in response to the peptide chain termination codons UAG and UAA. The chain is Peptide chain release factor 1 from Edwardsiella ictaluri (strain 93-146).